Consider the following 66-residue polypeptide: Large ribosomal subunit protein bL32 (66 aa).

The protein belongs to the bacterial ribosomal protein bL32 family.

This chain is Large ribosomal subunit protein bL32, found in Acetivibrio thermocellus (strain ATCC 27405 / DSM 1237 / JCM 9322 / NBRC 103400 / NCIMB 10682 / NRRL B-4536 / VPI 7372) (Clostridium thermocellum).